The chain runs to 524 residues: Protein tweety homolog 3 (524 aa).

At 1–42 (MAGVSYAAPWWVSLLHRLPHFDLRWEATSSQFRPEDADYQQA) the chain is on the extracellular side. The helical transmembrane segment at 43–63 (LLLLGATALACLALDLLFLLF) threads the bilayer. Over 64-86 (YSFWLCCRRRKTDEHLDADCCCT) the chain is Cytoplasmic. A helical transmembrane segment spans residues 87 to 107 (AWCVIITTLVCSAGIAVGFYG). The Extracellular portion of the chain corresponds to 108–211 (NGETSDGIHR…VDLYDWYRWL (104 aa)). Ca(2+) contacts are provided by Glu110 and Asp113. Asn126 and Asn144 each carry an N-linked (GlcNAc...) asparagine glycan. Residues 212–232 (GYLGLLLLDVIICLLVLVGLI) form a helical membrane-spanning segment. Residues 233-236 (RSSK) are Cytoplasmic-facing. A helical transmembrane segment spans residues 237–257 (GILVGVCLLGVLALVISWGAL). The Extracellular portion of the chain corresponds to 258 to 386 (GLELAVSVGS…LTGFCYDGVE (129 aa)). 2 disulfide bridges follow: Cys271–Cys381 and Cys299–Cys366. An N-linked (GlcNAc...) asparagine glycan is attached at Asn351. A helical membrane pass occupies residues 387 to 407 (GLIYLALFSFVTALMFSSIVC). The Cytoplasmic segment spans residues 408-524 (SIPHTWQQKR…PRPDSSGSGH (117 aa)). Disordered regions lie at residues 413–435 (WQQKRGPDDDGEEETAPGPRQAH) and 485–524 (RCENTPLIGRESPPPSYTSSMRAKYLATSQPRPDSSGSGH). Ser496 bears the Phosphoserine mark. The PY-motif; mediates interaction with NEDD4L signature appears at 498–501 (PPSY). Positions 501–524 (YTSSMRAKYLATSQPRPDSSGSGH) are enriched in polar residues. Phosphoserine is present on residues Ser504 and Ser522.

It belongs to the tweety family. As to quaternary structure, homotetramer; disulfide-linked. Forms cis-homodimers in the presence of Ca(2+). Interacts with NEDD4L. Ubiquitinated by NEDD4L. In terms of processing, N-glycosylated. Expressed in excitable tissues. Expressed in the brain, heart, skeletal muscle, colon, spleen, kidney and peripheral blood leukocytes. Also expressed in fat, the pancreas, thymus, and uterus.

It localises to the cell membrane. The enzyme catalyses chloride(in) = chloride(out). The catalysed reaction is L-glutamate(out) = L-glutamate(in). With respect to regulation, inhibited by (4-[(2-butyl-6,7-dichloro-2- cyclopentyl-2,3-dihydro-1-oxo-1H-inden-5-yl)oxy]butanoic acid), genistein and PD98059 (MEK1 inhibitor). Calcium-independent, swelling-dependent volume-regulated anion channel (VRAC-swell) which plays a pivotal role in the process of regulatory volume decrease (RVD) in the brain through the efflux of anions like chloride and organic osmolytes like glutamate. Probable large-conductance Ca(2+)-activated chloride channel. The protein is Protein tweety homolog 3 (Ttyh3) of Mus musculus (Mouse).